The following is a 212-amino-acid chain: Uridine kinase (212 aa).

Residue 13 to 20 (GGSGSGKT) participates in ATP binding.

Belongs to the uridine kinase family.

The protein localises to the cytoplasm. It carries out the reaction uridine + ATP = UMP + ADP + H(+). The catalysed reaction is cytidine + ATP = CMP + ADP + H(+). It functions in the pathway pyrimidine metabolism; CTP biosynthesis via salvage pathway; CTP from cytidine: step 1/3. Its pathway is pyrimidine metabolism; UMP biosynthesis via salvage pathway; UMP from uridine: step 1/1. The chain is Uridine kinase from Bacillus mycoides (strain KBAB4) (Bacillus weihenstephanensis).